A 318-amino-acid polypeptide reads, in one-letter code: NAD kinase (318 aa).

Catalysis depends on Asp84, which acts as the Proton acceptor. Residues 84–85, Arg89, 159–160, Arg170, Asp189, and 200–205 each bind NAD(+); these read DG, NE, and TAYAFS.

This sequence belongs to the NAD kinase family. The cofactor is a divalent metal cation.

It is found in the cytoplasm. It catalyses the reaction NAD(+) + ATP = ADP + NADP(+) + H(+). In terms of biological role, involved in the regulation of the intracellular balance of NAD and NADP, and is a key enzyme in the biosynthesis of NADP. Catalyzes specifically the phosphorylation on 2'-hydroxyl of the adenosine moiety of NAD to yield NADP. This is NAD kinase from Cutibacterium acnes (strain DSM 16379 / KPA171202) (Propionibacterium acnes).